The chain runs to 154 residues: SKP1-like protein 13 (154 aa).

Residues 96-154 (MLAANYLNIKDLLDLGCQTVADMITGKKPDEIRALLGIENDFTPEEEEEIRKENQWAFE) form an interaction with the F-box domain of F-box proteins region.

It belongs to the SKP1 family. In terms of assembly, part of a SCF (SKP1-cullin-F-box) protein ligase complex. Interacts with ADO3/FKF1, EBF1, PP2A13, SKIP15, SKIP16, CPR1/CPR30, At1g55000, At3g61590, At1g67340, At1g78100, At3g04660, At4g38940, At4g39550 and At5g49610. As to expression, mostly expressed in inflorescences, and, to a lower extent, in seedlings and siliques. Also detected in cotyledons, leaves, pollen and seeds.

It is found in the nucleus. Its pathway is protein modification; protein ubiquitination. In terms of biological role, involved in ubiquitination and subsequent proteasomal degradation of target proteins. Together with CUL1, RBX1 and a F-box protein, it forms a SCF E3 ubiquitin ligase complex. The functional specificity of this complex depends on the type of F-box protein. In the SCF complex, it serves as an adapter that links the F-box protein to CUL1. The chain is SKP1-like protein 13 (ASK13) from Arabidopsis thaliana (Mouse-ear cress).